A 379-amino-acid polypeptide reads, in one-letter code: Muconate cycloisomerase 1-1 (379 aa).

K169 is an active-site residue. Residues D198, E224, and D247 each contribute to the Mn(2+) site.

It belongs to the mandelate racemase/muconate lactonizing enzyme family. As to quaternary structure, homooctamer. Mn(2+) is required as a cofactor.

The catalysed reaction is (S)-muconolactone = cis,cis-muconate + H(+). It functions in the pathway aromatic compound metabolism; beta-ketoadipate pathway; 5-oxo-4,5-dihydro-2-furylacetate from catechol: step 2/3. Its function is as follows. Catalyzes a syn cycloisomerization. The protein is Muconate cycloisomerase 1-1 (catB1) of Acinetobacter lwoffii.